The sequence spans 118 residues: Holo-[acyl-carrier-protein] synthase (118 aa).

Residues Asp8 and Glu58 each coordinate Mg(2+).

This sequence belongs to the P-Pant transferase superfamily. AcpS family. It depends on Mg(2+) as a cofactor.

The protein resides in the cytoplasm. The enzyme catalyses apo-[ACP] + CoA = holo-[ACP] + adenosine 3',5'-bisphosphate + H(+). Transfers the 4'-phosphopantetheine moiety from coenzyme A to a Ser of acyl-carrier-protein. In Streptococcus pyogenes serotype M28 (strain MGAS6180), this protein is Holo-[acyl-carrier-protein] synthase.